A 208-amino-acid polypeptide reads, in one-letter code: Uracil phosphoribosyltransferase (208 aa).

5-phospho-alpha-D-ribose 1-diphosphate-binding positions include R78, R103, and 130–138; that span reads DPMLATGGS. Residues I193 and 198–200 contribute to the uracil site; that span reads GDA. D199 is a 5-phospho-alpha-D-ribose 1-diphosphate binding site.

Belongs to the UPRTase family. Mg(2+) is required as a cofactor.

It catalyses the reaction UMP + diphosphate = 5-phospho-alpha-D-ribose 1-diphosphate + uracil. It functions in the pathway pyrimidine metabolism; UMP biosynthesis via salvage pathway; UMP from uracil: step 1/1. With respect to regulation, allosterically activated by GTP. Catalyzes the conversion of uracil and 5-phospho-alpha-D-ribose 1-diphosphate (PRPP) to UMP and diphosphate. In Yersinia pestis, this protein is Uracil phosphoribosyltransferase.